The chain runs to 97 residues: MSIEPLTDEERADALDALPDWDYDDGRDAISRSFTFPDFSAAFAFMTRVALYAEKHDHHPEWSNVWNRVDILLTTHDAGGLSHRDVAMAEAIEALAE.

The protein belongs to the pterin-4-alpha-carbinolamine dehydratase family.

The enzyme catalyses (4aS,6R)-4a-hydroxy-L-erythro-5,6,7,8-tetrahydrobiopterin = (6R)-L-erythro-6,7-dihydrobiopterin + H2O. This chain is Putative pterin-4-alpha-carbinolamine dehydratase, found in Rhizorhabdus wittichii (strain DSM 6014 / CCUG 31198 / JCM 15750 / NBRC 105917 / EY 4224 / RW1) (Sphingomonas wittichii).